Reading from the N-terminus, the 363-residue chain is Phosphoserine aminotransferase (363 aa).

An L-glutamate-binding site is contributed by Arg-42. Pyridoxal 5'-phosphate is bound by residues 76–77 (AS), Trp-101, Thr-151, Asp-170, and Gln-193. Lys-194 bears the N6-(pyridoxal phosphate)lysine mark. Position 234–235 (234–235 (NT)) interacts with pyridoxal 5'-phosphate.

This sequence belongs to the class-V pyridoxal-phosphate-dependent aminotransferase family. SerC subfamily. Homodimer. It depends on pyridoxal 5'-phosphate as a cofactor.

It is found in the cytoplasm. The enzyme catalyses O-phospho-L-serine + 2-oxoglutarate = 3-phosphooxypyruvate + L-glutamate. The catalysed reaction is 4-(phosphooxy)-L-threonine + 2-oxoglutarate = (R)-3-hydroxy-2-oxo-4-phosphooxybutanoate + L-glutamate. It functions in the pathway amino-acid biosynthesis; L-serine biosynthesis; L-serine from 3-phospho-D-glycerate: step 2/3. Its function is as follows. Catalyzes the reversible conversion of 3-phosphohydroxypyruvate to phosphoserine and of 3-hydroxy-2-oxo-4-phosphonooxybutanoate to phosphohydroxythreonine. This chain is Phosphoserine aminotransferase, found in Listeria monocytogenes serovar 1/2a (strain ATCC BAA-679 / EGD-e).